The sequence spans 105 residues: Large ribosomal subunit protein uL24 (105 aa).

It belongs to the universal ribosomal protein uL24 family. In terms of assembly, part of the 50S ribosomal subunit.

One of two assembly initiator proteins, it binds directly to the 5'-end of the 23S rRNA, where it nucleates assembly of the 50S subunit. Functionally, one of the proteins that surrounds the polypeptide exit tunnel on the outside of the subunit. The protein is Large ribosomal subunit protein uL24 of Thermotoga petrophila (strain ATCC BAA-488 / DSM 13995 / JCM 10881 / RKU-1).